A 280-amino-acid polypeptide reads, in one-letter code: Fructose-1,6-bisphosphatase class 1 (280 aa).

Mg(2+)-binding residues include Glu-64, Asp-83, Leu-85, and Asp-86. Substrate-binding positions include 86 to 89 (DGSS), Tyr-189, and Lys-220. Glu-226 contributes to the Mg(2+) binding site.

It belongs to the FBPase class 1 family. Homotetramer. It depends on Mg(2+) as a cofactor.

The protein resides in the cytoplasm. The catalysed reaction is beta-D-fructose 1,6-bisphosphate + H2O = beta-D-fructose 6-phosphate + phosphate. It functions in the pathway carbohydrate biosynthesis; gluconeogenesis. This chain is Fructose-1,6-bisphosphatase class 1, found in Campylobacter jejuni subsp. jejuni serotype O:2 (strain ATCC 700819 / NCTC 11168).